The chain runs to 81 residues: Putative membrane protein insertion efficiency factor (81 aa).

Positions 61–81 are disordered; sequence NDGGYDPVPPAPSSRTSSIAE.

The protein belongs to the UPF0161 family.

It is found in the cell inner membrane. Its function is as follows. Could be involved in insertion of integral membrane proteins into the membrane. The sequence is that of Putative membrane protein insertion efficiency factor from Pseudomonas putida (strain ATCC 47054 / DSM 6125 / CFBP 8728 / NCIMB 11950 / KT2440).